A 361-amino-acid polypeptide reads, in one-letter code: Aromatic amino acid aminotransferase (361 aa).

Residue Lys215 is modified to N6-(pyridoxal phosphate)lysine.

Belongs to the class-II pyridoxal-phosphate-dependent aminotransferase family. Homodimer. The cofactor is pyridoxal 5'-phosphate.

It catalyses the reaction an aromatic L-alpha-amino acid + 2-oxoglutarate = an aromatic oxo-acid + L-glutamate. In terms of biological role, aminotransferase that catalyzes the conversion of aromatic amino acids and 2-oxoglutarate into corresponding aromatic oxo acids and L-glutamate. The protein is Aromatic amino acid aminotransferase of Mycolicibacterium smegmatis (strain ATCC 700084 / mc(2)155) (Mycobacterium smegmatis).